A 431-amino-acid chain; its full sequence is DNA polymerase delta subunit 2 (431 aa).

Belongs to the DNA polymerase delta/II small subunit family. Component of both the DNA polymerase delta and DNA polymerase zeta complexes. The DNA polymerase delta complex consisting of three subunits: the catalytic subunit PolD1 and two accessory subunits PolD2/Pol31 and PolD3/Pol32. Within the delta complex, interacts with both PolD1 and PolD3, and is able to interact with PolD1 in the absence of PolD3. Component of the DNA polymerase zeta complex consisting of four subunits: the catalytic subunit PolZ1 and three accessory subunits PolZ2/Rev7, PolD2/Pol31 and PolD3/Pol32. As to expression, expressed in ovaries and embryos (at the protein level).

The protein localises to the nucleus. Its subcellular location is the nucleoplasm. Accessory component of both the DNA polymerase delta complex and possibly the DNA polymerase zeta complex. As a component of the delta complex, participates in high fidelity genome replication, including lagging strand synthesis, DNA recombination and repair. Appears to promote the function of the DNA pol-delta complex accessory subunit PolD3 in both embryonic and postembryonic somatic cells. The chain is DNA polymerase delta subunit 2 from Drosophila melanogaster (Fruit fly).